A 338-amino-acid polypeptide reads, in one-letter code: Phenylalanine--tRNA ligase alpha subunit (338 aa).

Glu-252 provides a ligand contact to Mg(2+).

This sequence belongs to the class-II aminoacyl-tRNA synthetase family. Phe-tRNA synthetase alpha subunit type 1 subfamily. In terms of assembly, tetramer of two alpha and two beta subunits. Mg(2+) serves as cofactor.

The protein localises to the cytoplasm. The enzyme catalyses tRNA(Phe) + L-phenylalanine + ATP = L-phenylalanyl-tRNA(Phe) + AMP + diphosphate + H(+). The polypeptide is Phenylalanine--tRNA ligase alpha subunit (pheS) (Aquifex aeolicus (strain VF5)).